Consider the following 95-residue polypeptide: Small ribosomal subunit protein uS19 (95 aa).

Positions 73 to 95 (EFSPTRTYRGHGADKNAKGSKKK) are disordered.

It belongs to the universal ribosomal protein uS19 family.

In terms of biological role, protein S19 forms a complex with S13 that binds strongly to the 16S ribosomal RNA. This chain is Small ribosomal subunit protein uS19, found in Deinococcus radiodurans (strain ATCC 13939 / DSM 20539 / JCM 16871 / CCUG 27074 / LMG 4051 / NBRC 15346 / NCIMB 9279 / VKM B-1422 / R1).